Here is a 64-residue protein sequence, read N- to C-terminus: Large ribosomal subunit protein bL28 (64 aa).

This sequence belongs to the bacterial ribosomal protein bL28 family.

The sequence is that of Large ribosomal subunit protein bL28 from Campylobacter jejuni subsp. doylei (strain ATCC BAA-1458 / RM4099 / 269.97).